Reading from the N-terminus, the 311-residue chain is Tyrosine recombinase XerC (311 aa).

The Core-binding (CB) domain maps to 14–100 (ESLNETAKKF…SLRTFYKVLL (87 aa)). The Tyr recombinase domain maps to 121–303 (EVPKNFRINE…SKEKIKEVYR (183 aa)). Active-site residues include Arg-163, Lys-187, His-255, Arg-258, and His-281. Tyr-290 acts as the O-(3'-phospho-DNA)-tyrosine intermediate in catalysis.

It belongs to the 'phage' integrase family. XerC subfamily. In terms of assembly, forms a cyclic heterotetrameric complex composed of two molecules of XerC and two molecules of XerD.

Its subcellular location is the cytoplasm. Site-specific tyrosine recombinase, which acts by catalyzing the cutting and rejoining of the recombining DNA molecules. The XerC-XerD complex is essential to convert dimers of the bacterial chromosome into monomers to permit their segregation at cell division. It also contributes to the segregational stability of plasmids. The polypeptide is Tyrosine recombinase XerC (Leptospira interrogans serogroup Icterohaemorrhagiae serovar copenhageni (strain Fiocruz L1-130)).